The primary structure comprises 118 residues: UPF0342 protein BCE_0953 (118 aa).

It belongs to the UPF0342 family.

This Bacillus cereus (strain ATCC 10987 / NRS 248) protein is UPF0342 protein BCE_0953.